Reading from the N-terminus, the 891-residue chain is Nitrate reductase [NAD(P)H] (891 aa).

Residues 1 to 78 (MAASVEYNRQ…VKDPRDEATS (78 aa)) are disordered. Residues 63-76 (LDVEPSVKDPRDEA) show a composition bias toward basic and acidic residues. Cys-168 contacts Mo-molybdopterin. One can recognise a Cytochrome b5 heme-binding domain in the interval 515-590 (SAQFTMSEVR…LEMYRVGELI (76 aa)). Heme-binding residues include His-550 and His-573. The FAD-binding FR-type domain occupies 630-742 (REKVRCRLVD…KGPVGHIEYA (113 aa)). FAD is bound by residues 682–685 (RAYT), 699–703 (LIKIY), Phe-704, Phe-711, 716–718 (LMS), and Thr-769.

The protein belongs to the nitrate reductase family. In terms of assembly, homodimer. FAD is required as a cofactor. The cofactor is heme. Requires Mo-molybdopterin as cofactor.

The catalysed reaction is nitrite + NAD(+) + H2O = nitrate + NADH + H(+). It catalyses the reaction nitrite + NADP(+) + H2O = nitrate + NADPH + H(+). Its function is as follows. Nitrate reductase is a key enzyme involved in the first step of nitrate assimilation in plants, fungi and bacteria. The sequence is that of Nitrate reductase [NAD(P)H] (NAR-7) from Hordeum vulgare (Barley).